A 257-amino-acid polypeptide reads, in one-letter code: UPF0246 protein Spro_0686 (257 aa).

The protein belongs to the UPF0246 family.

In Serratia proteamaculans (strain 568), this protein is UPF0246 protein Spro_0686.